We begin with the raw amino-acid sequence, 186 residues long: Elongation factor P (186 aa).

The protein belongs to the elongation factor P family.

It is found in the cytoplasm. It participates in protein biosynthesis; polypeptide chain elongation. Involved in peptide bond synthesis. Stimulates efficient translation and peptide-bond synthesis on native or reconstituted 70S ribosomes in vitro. Probably functions indirectly by altering the affinity of the ribosome for aminoacyl-tRNA, thus increasing their reactivity as acceptors for peptidyl transferase. The protein is Elongation factor P of Prochlorococcus marinus subsp. pastoris (strain CCMP1986 / NIES-2087 / MED4).